The following is a 469-amino-acid chain: Ribosomal protein uS12 methylthiotransferase RimO (469 aa).

Residues M1–A115 enclose the MTTase N-terminal domain. [4Fe-4S] cluster-binding residues include C10, C46, C78, C180, C184, and C187. Residues N166 to A398 form the Radical SAM core domain. The region spanning A401–V469 is the TRAM domain.

This sequence belongs to the methylthiotransferase family. RimO subfamily. The cofactor is [4Fe-4S] cluster.

The protein localises to the cytoplasm. The catalysed reaction is L-aspartate(89)-[ribosomal protein uS12]-hydrogen + (sulfur carrier)-SH + AH2 + 2 S-adenosyl-L-methionine = 3-methylsulfanyl-L-aspartate(89)-[ribosomal protein uS12]-hydrogen + (sulfur carrier)-H + 5'-deoxyadenosine + L-methionine + A + S-adenosyl-L-homocysteine + 2 H(+). In terms of biological role, catalyzes the methylthiolation of an aspartic acid residue of ribosomal protein uS12. The protein is Ribosomal protein uS12 methylthiotransferase RimO of Herpetosiphon aurantiacus (strain ATCC 23779 / DSM 785 / 114-95).